The sequence spans 316 residues: Ribosomal RNA large subunit methyltransferase F (316 aa).

The disordered stretch occupies residues 200 to 222 (EEANKSTSRKVSNLNPKEKKNTN). Polar residues predominate over residues 204 to 214 (KSTSRKVSNLN).

It belongs to the methyltransferase superfamily. METTL16/RlmF family.

It localises to the cytoplasm. The enzyme catalyses adenosine(1618) in 23S rRNA + S-adenosyl-L-methionine = N(6)-methyladenosine(1618) in 23S rRNA + S-adenosyl-L-homocysteine + H(+). Functionally, specifically methylates the adenine in position 1618 of 23S rRNA. The polypeptide is Ribosomal RNA large subunit methyltransferase F (Flavobacterium johnsoniae (strain ATCC 17061 / DSM 2064 / JCM 8514 / BCRC 14874 / CCUG 350202 / NBRC 14942 / NCIMB 11054 / UW101) (Cytophaga johnsonae)).